We begin with the raw amino-acid sequence, 95 residues long: Protein TusB (95 aa).

This sequence belongs to the DsrH/TusB family. In terms of assembly, heterohexamer, formed by a dimer of trimers. The hexameric TusBCD complex contains 2 copies each of TusB, TusC and TusD. The TusBCD complex interacts with TusE.

The protein resides in the cytoplasm. Part of a sulfur-relay system required for 2-thiolation of 5-methylaminomethyl-2-thiouridine (mnm(5)s(2)U) at tRNA wobble positions. This chain is Protein TusB, found in Pectobacterium carotovorum subsp. carotovorum (strain PC1).